The chain runs to 146 residues: Large ribosomal subunit protein uL15 (146 aa).

Residues 1–66 form a disordered region; sequence MKLHELKPAP…LQRRMPKRGF (66 aa). Composition is skewed to gly residues over residues 21–31 and 42–52; these read QGIGSGMGKTA and SGGGVRPGFEG.

This sequence belongs to the universal ribosomal protein uL15 family. In terms of assembly, part of the 50S ribosomal subunit.

Functionally, binds to the 23S rRNA. In Pelotomaculum thermopropionicum (strain DSM 13744 / JCM 10971 / SI), this protein is Large ribosomal subunit protein uL15.